The following is a 443-amino-acid chain: 23S rRNA (uracil(1939)-C(5))-methyltransferase RlmD (443 aa).

One can recognise a TRAM domain in the interval 8–66; the sequence is KPLPAEPIAAHIESFAHDGKGIAHVDGRVVFVDGALPGEDVTFVYTEIKRDYAAGRVVE. 4 residues coordinate [4Fe-4S] cluster: cysteine 79, cysteine 85, cysteine 88, and cysteine 167. Residues glutamine 276, phenylalanine 305, asparagine 310, glutamate 326, aspartate 353, and aspartate 374 each contribute to the S-adenosyl-L-methionine site. The active-site Nucleophile is the cysteine 400.

Belongs to the class I-like SAM-binding methyltransferase superfamily. RNA M5U methyltransferase family. RlmD subfamily.

It catalyses the reaction uridine(1939) in 23S rRNA + S-adenosyl-L-methionine = 5-methyluridine(1939) in 23S rRNA + S-adenosyl-L-homocysteine + H(+). In terms of biological role, catalyzes the formation of 5-methyl-uridine at position 1939 (m5U1939) in 23S rRNA. This chain is 23S rRNA (uracil(1939)-C(5))-methyltransferase RlmD, found in Methylococcus capsulatus (strain ATCC 33009 / NCIMB 11132 / Bath).